We begin with the raw amino-acid sequence, 175 residues long: Methylated-DNA--protein-cysteine methyltransferase (175 aa).

DNA is bound by residues Tyr115 and Arg127. Cys144 serves as the catalytic Nucleophile; methyl group acceptor.

Belongs to the MGMT family.

It is found in the nucleus. It carries out the reaction a 6-O-methyl-2'-deoxyguanosine in DNA + L-cysteinyl-[protein] = S-methyl-L-cysteinyl-[protein] + a 2'-deoxyguanosine in DNA. The catalysed reaction is a 4-O-methyl-thymidine in DNA + L-cysteinyl-[protein] = a thymidine in DNA + S-methyl-L-cysteinyl-[protein]. Involved in the cellular defense against the biological effects of O6-methylguanine (O6-MeG) and O4-methylthymine (O4-MeT) in DNA. Repairs the methylated nucleobase in DNA by stoichiometrically transferring the methyl group to a cysteine residue in the enzyme. This is a suicide reaction: the enzyme is irreversibly inactivated. The polypeptide is Methylated-DNA--protein-cysteine methyltransferase (MGT1) (Candida albicans (strain SC5314 / ATCC MYA-2876) (Yeast)).